The following is a 171-amino-acid chain: MNKRNKVKHLNRNKGHRDALINNMITSLFKYERIESTQAKLKVVRSHAEKLITRAKKNLVTDLKPEVQLHNKREVMKRIKDREVVVKLFEDIAKRFETKNGGYTRVLKLVNRISDNSEVGILELTSRKERSTLLKERIEKREIQTKAREEKRATRKSNSAPVSKETTSKKK.

A compositionally biased stretch (basic and acidic residues) spans 140–152 (KREIQTKAREEKR). Positions 140–171 (KREIQTKAREEKRATRKSNSAPVSKETTSKKK) are disordered. Polar residues predominate over residues 156–165 (KSNSAPVSKE).

The protein belongs to the bacterial ribosomal protein bL17 family. As to quaternary structure, part of the 50S ribosomal subunit. Contacts protein L32.

The chain is Large ribosomal subunit protein bL17 from Leptospira interrogans serogroup Icterohaemorrhagiae serovar copenhageni (strain Fiocruz L1-130).